An 89-amino-acid polypeptide reads, in one-letter code: Small ribosomal subunit protein uS15 (89 aa).

The protein belongs to the universal ribosomal protein uS15 family. As to quaternary structure, part of the 30S ribosomal subunit. Forms a bridge to the 50S subunit in the 70S ribosome, contacting the 23S rRNA.

Functionally, one of the primary rRNA binding proteins, it binds directly to 16S rRNA where it helps nucleate assembly of the platform of the 30S subunit by binding and bridging several RNA helices of the 16S rRNA. Its function is as follows. Forms an intersubunit bridge (bridge B4) with the 23S rRNA of the 50S subunit in the ribosome. The protein is Small ribosomal subunit protein uS15 of Parvibaculum lavamentivorans (strain DS-1 / DSM 13023 / NCIMB 13966).